The chain runs to 370 residues: 4-hydroxy-3-methylbut-2-en-1-yl diphosphate synthase (flavodoxin) (370 aa).

[4Fe-4S] cluster contacts are provided by cysteine 265, cysteine 268, cysteine 300, and glutamate 307.

This sequence belongs to the IspG family. [4Fe-4S] cluster is required as a cofactor.

It catalyses the reaction (2E)-4-hydroxy-3-methylbut-2-enyl diphosphate + oxidized [flavodoxin] + H2O + 2 H(+) = 2-C-methyl-D-erythritol 2,4-cyclic diphosphate + reduced [flavodoxin]. It functions in the pathway isoprenoid biosynthesis; isopentenyl diphosphate biosynthesis via DXP pathway; isopentenyl diphosphate from 1-deoxy-D-xylulose 5-phosphate: step 5/6. Its function is as follows. Converts 2C-methyl-D-erythritol 2,4-cyclodiphosphate (ME-2,4cPP) into 1-hydroxy-2-methyl-2-(E)-butenyl 4-diphosphate. The protein is 4-hydroxy-3-methylbut-2-en-1-yl diphosphate synthase (flavodoxin) of Symbiobacterium thermophilum (strain DSM 24528 / JCM 14929 / IAM 14863 / T).